A 93-amino-acid polypeptide reads, in one-letter code: Pyrimidine/purine nucleoside phosphorylase (93 aa).

This sequence belongs to the nucleoside phosphorylase PpnP family.

It catalyses the reaction a purine D-ribonucleoside + phosphate = a purine nucleobase + alpha-D-ribose 1-phosphate. The enzyme catalyses adenosine + phosphate = alpha-D-ribose 1-phosphate + adenine. It carries out the reaction cytidine + phosphate = cytosine + alpha-D-ribose 1-phosphate. The catalysed reaction is guanosine + phosphate = alpha-D-ribose 1-phosphate + guanine. It catalyses the reaction inosine + phosphate = alpha-D-ribose 1-phosphate + hypoxanthine. The enzyme catalyses thymidine + phosphate = 2-deoxy-alpha-D-ribose 1-phosphate + thymine. It carries out the reaction uridine + phosphate = alpha-D-ribose 1-phosphate + uracil. The catalysed reaction is xanthosine + phosphate = alpha-D-ribose 1-phosphate + xanthine. Functionally, catalyzes the phosphorolysis of diverse nucleosides, yielding D-ribose 1-phosphate and the respective free bases. Can use uridine, adenosine, guanosine, cytidine, thymidine, inosine and xanthosine as substrates. Also catalyzes the reverse reactions. The polypeptide is Pyrimidine/purine nucleoside phosphorylase (Aliivibrio fischeri (strain ATCC 700601 / ES114) (Vibrio fischeri)).